The primary structure comprises 261 residues: Sulfur carrier protein FdhD (261 aa).

C105 (cysteine persulfide intermediate) is an active-site residue. Mo-bis(molybdopterin guanine dinucleotide) is bound at residue 245-250; sequence FIRGDR.

Belongs to the FdhD family.

The protein resides in the cytoplasm. In terms of biological role, required for formate dehydrogenase (FDH) activity. Acts as a sulfur carrier protein that transfers sulfur from IscS to the molybdenum cofactor prior to its insertion into FDH. The sequence is that of Sulfur carrier protein FdhD from Listeria innocua serovar 6a (strain ATCC BAA-680 / CLIP 11262).